We begin with the raw amino-acid sequence, 80 residues long: RNA-binding protein Hfq (80 aa).

The Sm domain maps to 10-69; that stretch reads DPFLNTLRREHVPVSIYLVNGIKLQGQIESFDQYVVLLKNTVTQMVYKHAISTVVPARPV.

The protein belongs to the Hfq family. In terms of assembly, homohexamer.

Its function is as follows. RNA chaperone that binds small regulatory RNA (sRNAs) and mRNAs to facilitate mRNA translational regulation in response to envelope stress, environmental stress and changes in metabolite concentrations. Also binds with high specificity to tRNAs. The sequence is that of RNA-binding protein Hfq from Azoarcus sp. (strain BH72).